A 608-amino-acid polypeptide reads, in one-letter code: Fatty acid amide hydrolase (608 aa).

Catalysis depends on charge relay system residues Lys-206 and Ser-282. Position 303–306 (303–306) interacts with substrate; it reads GGGS. Ser-306 (acyl-ester intermediate) is an active-site residue.

It belongs to the amidase family. Forms homodimers.

It is found in the endoplasmic reticulum membrane. It localises to the cell membrane. The catalysed reaction is N-(9Z,12Z-octadecadienoyl)-ethanolamine + H2O = ethanolamine + (9Z,12Z)-octadecadienoate. It catalyses the reaction N-hexadecanoylethanolamine + H2O = ethanolamine + hexadecanoate. It carries out the reaction N-dodecanoylethanolamine + H2O = dodecanoate + ethanolamine. Inhibited by methyl arachidonyl fluorophosphonate (MAFP). Catalyzes the hydrolysis of bioactive endogenous fatty acid amides to their corresponding acids. The hydrolysis of endogenous amidated lipids terminates their participation as lipid mediators in various signaling systems. Converts a wide range of N-acylethanolamines (NAEs) to their corresponding free fatty acids and ethanolamine. This Oryza sativa subsp. japonica (Rice) protein is Fatty acid amide hydrolase.